A 104-amino-acid polypeptide reads, in one-letter code: uncharacterized protein (104 aa).

A coiled-coil region spans residues 24-69 (VIKQIIEKYNDKVKELDTLKNQYQNLQQDYENLKQQVSLQRQTMIS).

This is an uncharacterized protein from Acanthamoeba polyphaga mimivirus (APMV).